The following is a 240-amino-acid chain: MVVYRLIEDPIFPHPDEAEPDGLLAVGGDLSPERLLSAYASGIFPWYDERSPILWWSLDPRLILNFDKLHVSRRVKRKVRKREYTVTFDRAFESVIANCARKFRPGQAGTWILPEMIEAYVKLHKLGFVHSVEVWNREGNLAGGLYGVSLGKVFSGESMFFLEPDASKVGFSYLVQWLKNREFHFVDCQQPTDHLKSLGAEEVSRELFLDMLDEALEHPALRGTWEFMEGEYEMITEVLS.

The protein belongs to the L/F-transferase family.

It is found in the cytoplasm. It catalyses the reaction N-terminal L-lysyl-[protein] + L-leucyl-tRNA(Leu) = N-terminal L-leucyl-L-lysyl-[protein] + tRNA(Leu) + H(+). The enzyme catalyses N-terminal L-arginyl-[protein] + L-leucyl-tRNA(Leu) = N-terminal L-leucyl-L-arginyl-[protein] + tRNA(Leu) + H(+). It carries out the reaction L-phenylalanyl-tRNA(Phe) + an N-terminal L-alpha-aminoacyl-[protein] = an N-terminal L-phenylalanyl-L-alpha-aminoacyl-[protein] + tRNA(Phe). In terms of biological role, functions in the N-end rule pathway of protein degradation where it conjugates Leu, Phe and, less efficiently, Met from aminoacyl-tRNAs to the N-termini of proteins containing an N-terminal arginine or lysine. This chain is Leucyl/phenylalanyl-tRNA--protein transferase, found in Maridesulfovibrio salexigens (strain ATCC 14822 / DSM 2638 / NCIMB 8403 / VKM B-1763) (Desulfovibrio salexigens).